The chain runs to 974 residues: Probable proton ATPase 1B (974 aa).

A compositionally biased stretch (basic and acidic residues) spans 1–23 (MSSKKYELDAAAFEDKPESHSDA). Residues 1–61 (MSSKKYELDA…ATDLLPPSKG (61 aa)) are disordered. 4 helical membrane-spanning segments follow: residues 93–112 (GLWG…EFAL), 118–137 (GAIL…YETI), 265–286 (VMLA…YLLA), and 295–321 (ALQF…TLAV). Catalysis depends on aspartate 351, which acts as the 4-aspartylphosphate intermediate. A run of 6 helical transmembrane segments spans residues 631–651 (AAAD…AMLV), 662–684 (FLTY…CFSL), 698–712 (FFHL…ITLL), 738–761 (VVFV…LWIG), 813–840 (FFFY…AASF), and 869–887 (VWIY…KVLA). The tract at residues 952–974 (REDTHVLNESTSPVNAFSPKVKK) is disordered.

This sequence belongs to the cation transport ATPase (P-type) (TC 3.A.3) family. Type IIIA subfamily.

Its subcellular location is the membrane. It catalyses the reaction ATP + H2O + H(+)(in) = ADP + phosphate + 2 H(+)(out). The polypeptide is Probable proton ATPase 1B (H1B) (Leishmania donovani).